The following is a 2442-amino-acid chain: Piezo-type mechanosensitive ion channel component 1 (2442 aa).

Residues 1-5 lie on the Extracellular side of the membrane; it reads MTVPP. Residues 6 to 26 form a helical membrane-spanning segment; it reads LLKSCVVKLLLPAALLAAAII. Residue Arg27 is a topological domain, cytoplasmic. Residues 28-48 traverse the membrane as a helical segment; sequence PSFLSIGYVLLALVSAVLPPI. Residues 49–56 lie on the Extracellular side of the membrane; that stretch reads RKSLALPK. A helical membrane pass occupies residues 57–77; sequence LVGTFVIITFLFCLAVALGVG. The Cytoplasmic portion of the chain corresponds to 78 to 122; sequence SYQISEQVVHKNDRTYICNRSDTTLFRSIGLVRFHPTGTFESTRA. A helical membrane pass occupies residues 123–143; sequence FLPEIIATSAALLTIIIVMFL. Over 144–173 the chain is Extracellular; the sequence is SHRDEQLDVVGDVVTVRSESGREQRRQRKL. A helical transmembrane segment spans residues 174–196; sequence AAIMWSAIGNSLRRLTNFVLFLF. Topologically, residues 197-198 are cytoplasmic; the sequence is TA. A helical membrane pass occupies residues 199-219; sequence YVGIVKPSLSNSIYFLAFLFI. Topologically, residues 220–239 are extracellular; it reads STWWSTYTPLRHGVYNQIKK. Residues 240-260 traverse the membrane as a helical segment; it reads FLIFYSALHFLVLYTYQIPIV. Residues 261 to 303 lie on the Cytoplasmic side of the membrane; that stretch reads HHSWLPTGSFLPRLFGLTVLMDSSCPEWWKFPFVAPDFNDDDL. A helical transmembrane segment spans residues 304–324; it reads IMKWPLYANPIVVLVFFYLTV. Residues 325-454 are Extracellular-facing; that stretch reads AQYKFTRNGS…GDKESAASKG (130 aa). N-linked (GlcNAc...) asparagine glycans are attached at residues Asn332, Asn392, and Asn440. Residues 389-417 are disordered; the sequence is LLSNASSSANDDEQGRARSRSPLRNGEEQ. A helical membrane pass occupies residues 455–475; it reads MIAVMTFVIFHSYSIALTAMM. At 476 to 478 the chain is on the cytoplasmic side; the sequence is TWA. A helical membrane pass occupies residues 479 to 499; that stretch reads LLYHSIFGLILLILTCILWIF. Over 500-506 the chain is Extracellular; the sequence is RDTRKSS. The helical transmembrane segment at 507-527 threads the bilayer; the sequence is FAMAPIILMYIEFLLILQYFL. Topologically, residues 528 to 552 are cytoplasmic; that stretch reads SMDIHAEIGDPAWMNFVGIEWTTLP. Residues 553 to 573 traverse the membrane as a helical segment; sequence VHAVIILCVQTLLTLPVFLLL. Topologically, residues 574 to 633 are extracellular; sequence RLARREKFYESLSDYERQRRINSYGTFGASKTGAGGVAVAKFQDPKSRKFAAFVEYLSNK. A helical transmembrane segment spans residues 634–654; sequence VSVYFIFVVSVVLLVVSTCFA. Topologically, residues 655-656 are cytoplasmic; sequence PN. The chain crosses the membrane as a helical span at residues 657–677; that stretch reads FYNILFFALWALNLIYLKFSF. At 678 to 683 the chain is on the extracellular side; that stretch reads RLYRGL. A helical transmembrane segment spans residues 684 to 704; the sequence is AYAFWLTLTFYTSIVIIALYI. The Cytoplasmic portion of the chain corresponds to 705–739; that stretch reads YQFPGVSQWIIRNTSLSQEWLNAIGLVDFRAIGES. Residues 740–760 traverse the membrane as a helical segment; the sequence is GALFLQLLAPIALFVVTMLQL. Residues 761–832 are Extracellular-facing; that stretch reads KFFHGPWSRA…WRFFEVHISK (72 aa). The segment at 768-798 is disordered; it reads SRATSPRRAENDPPTSTTEAAAVASTSGTQG. The segment covering 782 to 794 has biased composition (low complexity); the sequence is TSTTEAAAVASTS. Asn816 carries an N-linked (GlcNAc...) asparagine glycan. A helical membrane pass occupies residues 833–853; that stretch reads IVFVIIAIFIANNINALYIPL. The Cytoplasmic segment spans residues 854-874; the sequence is VILLSLAICLPSAADGIFSLF. Residues 875–895 form a helical membrane-spanning segment; it reads MCAYLFLVALSKMIYQLDIVP. Residues 896 to 931 are Extracellular-facing; sequence ELSQIDRGVGADNCSHGNISMPEWFGLKKEVEGTEP. N-linked (GlcNAc...) asparagine glycans are attached at residues Asn908 and Asn913. A helical membrane pass occupies residues 932 to 952; that stretch reads IYMLFGVIVSIIALAFQSIVI. At 953 to 990 the chain is on the cytoplasmic side; sequence YRQRHYRASLGLPESMRAKVFPDFHHSHFDRSLKNAIQ. A helical transmembrane segment spans residues 991–1011; sequence FLIDYGFYKFGLEITMIAIGI. A topological domain (extracellular) is located at residue Asp1012. Residues 1013 to 1033 form a helical membrane-spanning segment; sequence IFNRMDALAAIQCFWLVLFAL. Residues 1034–1041 are Cytoplasmic-facing; that stretch reads NKRVFVRR. A helical membrane pass occupies residues 1042 to 1062; it reads IWVFYVIYMAILYPLQFFSYV. Residues 1063–1096 lie on the Extracellular side of the membrane; sequence GLPPDSCIEYPWSYWIPSYSDDARFNLSYLLNLS. 2 N-linked (GlcNAc...) asparagine glycosylation sites follow: Asn1088 and Asn1094. The chain crosses the membrane as a helical span at residues 1097–1117; the sequence is IYGVNWPSAYLIGDFFVLLLA. Over 1118-1160 the chain is Cytoplasmic; it reads SCQLAVFRREGEDNDSIYNDGNFVIKPENPQYDFIDTKKSYVD. Residues 1161–1181 form a helical membrane-spanning segment; it reads YFKSFVFHYGHWITLMSTLAA. At 1182 to 1187 the chain is on the extracellular side; sequence GIAGTS. A helical membrane pass occupies residues 1188–1210; sequence LFALGYIIFTLTMLWSGNNLYVM. The Cytoplasmic segment spans residues 1211–1231; that stretch reads NSTLRSFEHTLKRWNALLGYT. The chain crosses the membrane as a helical span at residues 1232–1252; the sequence is LFTITMKVCLQIFGCVFLSWF. At 1253-1299 the chain is on the extracellular side; it reads DQSGGWGKTLCIVRQLFSITCVNNECHVLKELEDFSKACAVETKEGN. The helical transmembrane segment at 1300–1320 threads the bilayer; the sequence is IGFDVIALSFLVFQIRIFHSW. Residues 1321 to 1615 lie on the Cytoplasmic side of the membrane; the sequence is YFQHCMVEYR…VVNCIGAHTD (295 aa). A disordered region spans residues 1463–1502; that stretch reads DTIKDPDSRALIAVSEPEARKPGGTEETDGDEDEDNKDSK. Over residues 1488 to 1498 the composition is skewed to acidic residues; sequence EETDGDEDEDN. Residues 1616–1636 traverse the membrane as a helical segment; it reads ILCYFFAIMTQVMTGGLITLP. The Extracellular portion of the chain corresponds to 1637-1654; it reads LPLMSLFWGNLSNPRPSK. Asn1646 is a glycosylation site (N-linked (GlcNAc...) asparagine). Residues 1655–1675 form a helical membrane-spanning segment; that stretch reads FFWVTMITYTECVIVIKFVCQ. Residues 1676 to 1706 are Cytoplasmic-facing; it reads FAFMPYNSITWRTEHQMDPMSLDKLFGVSQR. The helical transmembrane segment at 1707–1727 threads the bilayer; the sequence is DSFALWDIVLLFSLFFHRYML. The Extracellular segment spans residues 1728-1833; that stretch reads RKLGLWKDAN…KFRYIRDLYP (106 aa). Residue Asn1737 is glycosylated (N-linked (GlcNAc...) asparagine). A helical transmembrane segment spans residues 1834 to 1854; sequence IMFGIDVICFLIMTFGYSAFG. The Cytoplasmic segment spans residues 1855-1866; the sequence is EGGSGNVLDDVK. Residues 1867–1887 form a helical membrane-spanning segment; the sequence is ASRIPVTLVVMLVGMTLAIII. At 1888 to 1900 the chain is on the extracellular side; the sequence is DRALYLRKSVVGK. Residues 1901–1921 form a helical membrane-spanning segment; that stretch reads LIYQVLMIAFLHIWVFLVLPN. Residues 1922–1930 lie on the Cytoplasmic side of the membrane; the sequence is MTRRSAISN. A helical membrane pass occupies residues 1931 to 1951; the sequence is HVAQALYVIKSCYFLVSAWQI. Over 1952 to 2046 the chain is Extracellular; it reads RNGYPELCIG…KGKLVKYMMG (95 aa). A helical transmembrane segment spans residues 2047 to 2067; sequence FPIIIGVVIFIFSPLLLWSLL. Over 2068–2346 the chain is Cytoplasmic; it reads NQIGTISMPE…VGFIDRAFPS (279 aa). A helical transmembrane segment spans residues 2347–2367; the sequence is FLAKVFKGGVIAVYLSVILVV. The Extracellular portion of the chain corresponds to 2368 to 2442; that stretch reads GRGLVRGIFT…WTRMSKKKQE (75 aa).

It belongs to the PIEZO (TC 1.A.75) family. In terms of tissue distribution, expressed in the pharyngeal-intestinal and spermathecal-uterine valves and in multiple reproductive tissues including the germline, somatic oviduct, and spermatheca. During reproduction, it is expressed in sheath cells, sperm, both spermathecal valves and the spermathecal bag cells.

It localises to the cell membrane. Pore-forming subunit of a mechanosensitive non-specific cation channel. Generates currents characterized by a linear current-voltage relationship. Plays a role in reproduction by positively regulating inter-tissue signaling to promote oocyte maturation, ovulation and fertilization, and sperm navigation from and to the spermatheca. May play a role in regulating cytosolic and endoplasmic reticulum calcium ion release. This is Piezo-type mechanosensitive ion channel component 1 from Caenorhabditis elegans.